The primary structure comprises 305 residues: Glutaminase (305 aa).

Substrate-binding residues include Ser61, Asn113, Glu158, Asn165, Tyr189, Tyr241, and Val259.

This sequence belongs to the glutaminase family. In terms of assembly, homotetramer.

It catalyses the reaction L-glutamine + H2O = L-glutamate + NH4(+). This chain is Glutaminase, found in Clostridium botulinum (strain Loch Maree / Type A3).